A 573-amino-acid chain; its full sequence is MTHSKGRPVTYKTSASPESGGGFVDWTLNLNTIQSDKFLNLLLSMVPVIYQKNQEDRHKKVNGIWQDGLSGAAQTFSKRSEPHLDYHEFSEQAFHSSSSGHTPASCSPKYDDYAGYNYCDGREASETTAMLQDEDLSSEGDDVIVETSQRIPKESSGVMALQILVPFLLAGFGTVSAGMVLDIVQHWEVFKNVTEVFILVPALLGLKGNLEMTLASRLSTAVNVGKMDSPIEKWNLIIGNLALKQVQATVVGFLAAVAAIILGWIPEGKYYLSHSILLCSSSVATAFIASLLQGIIMVGVIVGSKKTGINPDNVATPIAASFGDLITLAILAWISQGLYSCLETYYYISPLVCAFFLALTPIWIIIAAKHPATRTVLHSGWEPVITAMVISSIGGLILDTTVSDPNLVGIVVYTPVINGIGGNLVAIQASRISTYLHLHSIPGELPEEPKGCSYPFRTFFGSGVNNKSAQVLLLFVIPGHLIFLYTIHLMKSGHTSLTVVFVVVYLFAAVLQVFTLLWIADWMVHRFWRKGKDPDSFSIPYLTALGDLLGTALLALSFHFLWLIGDRDGDVGD.

The Extracellular segment spans residues 1–162 (MTHSKGRPVT…KESSGVMALQ (162 aa)). Phosphoserine occurs at positions 137 and 138. Residues 163–183 (ILVPFLLAGFGTVSAGMVLDI) form a helical membrane-spanning segment. At 184–195 (VQHWEVFKNVTE) the chain is on the cytoplasmic side. A helical transmembrane segment spans residues 196–216 (VFILVPALLGLKGNLEMTLAS). At 217 to 245 (RLSTAVNVGKMDSPIEKWNLIIGNLALKQ) the chain is on the extracellular side. The chain crosses the membrane as a helical span at residues 246–266 (VQATVVGFLAAVAAIILGWIP). The Cytoplasmic portion of the chain corresponds to 267-282 (EGKYYLSHSILLCSSS). The chain crosses the membrane as a helical span at residues 283 to 303 (VATAFIASLLQGIIMVGVIVG). Over 304–313 (SKKTGINPDN) the chain is Extracellular. The chain crosses the membrane as a helical span at residues 314–334 (VATPIAASFGDLITLAILAWI). Residues 335 to 347 (SQGLYSCLETYYY) lie on the Cytoplasmic side of the membrane. Residues 348 to 368 (ISPLVCAFFLALTPIWIIIAA) form a helical membrane-spanning segment. Topologically, residues 369–376 (KHPATRTV) are extracellular. Residues 377-397 (LHSGWEPVITAMVISSIGGLI) form a helical membrane-spanning segment. Residues 398 to 406 (LDTTVSDPN) are Cytoplasmic-facing. A helical membrane pass occupies residues 407 to 427 (LVGIVVYTPVINGIGGNLVAI). At 428–469 (QASRISTYLHLHSIPGELPEEPKGCSYPFRTFFGSGVNNKSA) the chain is on the extracellular side. The helical transmembrane segment at 470-490 (QVLLLFVIPGHLIFLYTIHLM) threads the bilayer. The Cytoplasmic portion of the chain corresponds to 491 to 498 (KSGHTSLT). A helical transmembrane segment spans residues 499 to 519 (VVFVVVYLFAAVLQVFTLLWI). Residues 520–543 (ADWMVHRFWRKGKDPDSFSIPYLT) are Extracellular-facing. The chain crosses the membrane as a helical span at residues 544–564 (ALGDLLGTALLALSFHFLWLI). At 565–573 (GDRDGDVGD) the chain is on the cytoplasmic side.

It belongs to the SLC41A transporter family.

Its subcellular location is the cell membrane. The enzyme catalyses Mg(2+)(in) = Mg(2+)(out). It catalyses the reaction Mn(2+)(in) = Mn(2+)(out). The catalysed reaction is Co(2+)(in) = Co(2+)(out). It carries out the reaction Ni(2+)(in) = Ni(2+)(out). The enzyme catalyses Fe(2+)(in) = Fe(2+)(out). In terms of biological role, acts as a plasma-membrane magnesium transporter. Can also mediate the transport of other divalent metal cations in an order of Ba(2+) &gt; Ni(2+) &gt; Co(2+) &gt; Fe(2+) &gt; Mn(2+). The polypeptide is Solute carrier family 41 member 2 (Slc41a2) (Mus musculus (Mouse)).